Here is a 122-residue protein sequence, read N- to C-terminus: Large ribosomal subunit protein bL20c (122 aa).

The protein belongs to the bacterial ribosomal protein bL20 family.

The protein localises to the plastid. Its subcellular location is the chloroplast. Functionally, binds directly to 23S ribosomal RNA and is necessary for the in vitro assembly process of the 50S ribosomal subunit. It is not involved in the protein synthesizing functions of that subunit. This is Large ribosomal subunit protein bL20c from Dioscorea elephantipes (Elephant's foot yam).